The sequence spans 261 residues: tRNA pseudouridine synthase A (261 aa).

The Nucleophile role is filled by D51. Substrate is bound at residue Y109.

It belongs to the tRNA pseudouridine synthase TruA family. In terms of assembly, homodimer.

The enzyme catalyses uridine(38/39/40) in tRNA = pseudouridine(38/39/40) in tRNA. Its function is as follows. Formation of pseudouridine at positions 38, 39 and 40 in the anticodon stem and loop of transfer RNAs. The protein is tRNA pseudouridine synthase A of Shewanella baltica (strain OS195).